Reading from the N-terminus, the 402-residue chain is Putative RNA-guided DNA endonuclease InsQ (402 aa).

Residues D183 and E267 contribute to the active site. Zn(2+) contacts are provided by C334, C337, C353, and C356. D363 is an active-site residue.

In the N-terminal section; belongs to the transposase 2 family. This sequence in the C-terminal section; belongs to the transposase 35 family.

Functionally, an RNA-guided dsDNA endonuclease. When guided by an RNA derived from the right-end element of its insertion sequence element (IS), cleaves DNA downstream of the transposon-associated motif (TAM). Cleaves supercoiled and linear DNA in a staggered manner 15-21 bases from the TAM yielding 5'-overhangs. Binds reRNA, an approximately 150 nucleotide base sRNA derived from the 3' end of its own gene, the right end (RE) of the insertion sequence (IS) plus sequence downstream of the IS. In terms of biological role, not required for transposition of the insertion element. The corresponding transposase in strains MG1655 and W3110 is a truncated pseudogene (yncK). The sequence is that of Putative RNA-guided DNA endonuclease InsQ (insQ) from Escherichia coli (strain K12).